We begin with the raw amino-acid sequence, 642 residues long: Sterol O-acyltransferase 2 (642 aa).

The segment at 174 to 194 (KSSPDAVDSVGKNDGAAPTTV) is disordered. S175 and S176 each carry phosphoserine. 5 helical membrane-spanning segments follow: residues 215 to 235 (FSGL…KALI), 292 to 312 (TGWI…MYLT), 404 to 424 (ISAK…QIEY), 442 to 462 (IFGT…PVAM), and 485 to 505 (LLVD…YLIW). The short motif at 523-529 (FYGDWWN) is the FYXDWWN motif element. The next 2 membrane-spanning stretches (helical) occupy residues 567 to 587 (ATLM…YVIF) and 622 to 642 (VIFW…YLTF). The active site involves H579.

It belongs to the membrane-bound acyltransferase family. Sterol o-acyltransferase subfamily.

The protein localises to the endoplasmic reticulum membrane. The catalysed reaction is ergosterol + an acyl-CoA = ergosteryl ester + CoA. It carries out the reaction zymosterol + an acyl-CoA = zymosterol ester + CoA. Sterol O-acyltransferase that catalyzes the formation of stery esters. In Saccharomyces cerevisiae (strain ATCC 204508 / S288c) (Baker's yeast), this protein is Sterol O-acyltransferase 2.